A 234-amino-acid polypeptide reads, in one-letter code: Proteasome subunit alpha (234 aa).

The protein belongs to the peptidase T1A family. In terms of assembly, the 20S proteasome core is composed of 14 alpha and 14 beta subunits that assemble into four stacked heptameric rings, resulting in a barrel-shaped structure. The two inner rings, each composed of seven catalytic beta subunits, are sandwiched by two outer rings, each composed of seven alpha subunits. The catalytic chamber with the active sites is on the inside of the barrel. Has a gated structure, the ends of the cylinder being occluded by the N-termini of the alpha-subunits. Is capped by the proteasome-associated ATPase, ARC.

Its subcellular location is the cytoplasm. The protein operates within protein degradation; proteasomal Pup-dependent pathway. With respect to regulation, the formation of the proteasomal ATPase ARC-20S proteasome complex, likely via the docking of the C-termini of ARC into the intersubunit pockets in the alpha-rings, may trigger opening of the gate for substrate entry. Interconversion between the open-gate and close-gate conformations leads to a dynamic regulation of the 20S proteasome proteolysis activity. Its function is as follows. Component of the proteasome core, a large protease complex with broad specificity involved in protein degradation. In Acidothermus cellulolyticus (strain ATCC 43068 / DSM 8971 / 11B), this protein is Proteasome subunit alpha.